We begin with the raw amino-acid sequence, 348 residues long: Photosystem II protein D1 (348 aa).

3 helical membrane passes run 33-50 (YIGW…LATV), 122-137 (HFIF…EWEF), and 146-160 (WIFV…ASCA). Histidine 122 is a chlorophyll a binding site. Tryptophan 130 lines the pheophytin a pocket. 2 residues coordinate [CaMn4O5] cluster: aspartate 174 and glutamate 193. A helical transmembrane segment spans residues 201–222 (FHILGVAGVFGGSLFSAMHGSL). Histidine 202 is a chlorophyll a binding site. Residues histidine 219 and 268–269 (SF) contribute to the a quinone site. Histidine 219 provides a ligand contact to Fe cation. Fe cation is bound at residue histidine 276. Residues 278 to 292 (FLAAWPVIGIWFTAL) form a helical membrane-spanning segment. [CaMn4O5] cluster-binding residues include histidine 336, glutamate 337, aspartate 346, and alanine 348.

It belongs to the reaction center PufL/M/PsbA/D family. PSII is composed of 1 copy each of membrane proteins PsbA, PsbB, PsbC, PsbD, PsbE, PsbF, PsbH, PsbI, PsbJ, PsbK, PsbL, PsbM, PsbT, PsbX, PsbY, PsbZ, Psb30/Ycf12, at least 3 peripheral proteins of the oxygen-evolving complex and a large number of cofactors. It forms dimeric complexes. The cofactor is The D1/D2 heterodimer binds P680, chlorophylls that are the primary electron donor of PSII, and subsequent electron acceptors. It shares a non-heme iron and each subunit binds pheophytin, quinone, additional chlorophylls, carotenoids and lipids. D1 provides most of the ligands for the Mn4-Ca-O5 cluster of the oxygen-evolving complex (OEC). There is also a Cl(-1) ion associated with D1 and D2, which is required for oxygen evolution. The PSII complex binds additional chlorophylls, carotenoids and specific lipids.. Tyr-165 forms a radical intermediate that is referred to as redox-active TyrZ, YZ or Y-Z.

It is found in the plastid. The protein localises to the chloroplast thylakoid membrane. The catalysed reaction is 2 a plastoquinone + 4 hnu + 2 H2O = 2 a plastoquinol + O2. Its function is as follows. Photosystem II (PSII) is a light-driven water:plastoquinone oxidoreductase that uses light energy to abstract electrons from H(2)O, generating O(2) and a proton gradient subsequently used for ATP formation. It consists of a core antenna complex that captures photons, and an electron transfer chain that converts photonic excitation into a charge separation. The D1/D2 (PsbA/PsbD) reaction center heterodimer binds P680, the primary electron donor of PSII as well as several subsequent electron acceptors. The polypeptide is Photosystem II protein D1 (Heterocapsa rotundata (Dinoflagellate)).